We begin with the raw amino-acid sequence, 244 residues long: Probable transcriptional regulatory protein CHY_1525 (244 aa).

Belongs to the TACO1 family.

Its subcellular location is the cytoplasm. This chain is Probable transcriptional regulatory protein CHY_1525, found in Carboxydothermus hydrogenoformans (strain ATCC BAA-161 / DSM 6008 / Z-2901).